Here is a 320-residue protein sequence, read N- to C-terminus: Adhesin MafA 1/4 (320 aa).

An N-terminal signal peptide occupies residues 1 to 18 (MRARLLIPILFSVFILSA). Cys-19 is lipidated: N-palmitoyl cysteine. A lipid anchor (S-diacylglycerol cysteine) is attached at Cys-19. Residues 287-320 (NHTGNSAPSVEADNSHEGYGYSDEAVRQHRQGQP) form a disordered region.

It belongs to the MafA family.

Its subcellular location is the cell outer membrane. The protein is Adhesin MafA 1/4 (mafA1) of Neisseria gonorrhoeae (strain ATCC 700825 / FA 1090).